We begin with the raw amino-acid sequence, 302 residues long: MQKFDTKTFQGLILALQDFWARQGCAIVQPLDMEVGAGTFHPQTFLRSIGPEPMNSAYVQPCRRPTDGRYGENPNRLQQYYQFQVVLKPSPKNIQDLYLKSLEEIGIDTSIHDIRFVEDNWESPTLGAWGLGWEIWLNGMEVTQFTYFQQVGGLECSPVTGEITYGLERIAMYVQGVESIYDLVWTDGPMGKLTYGDIFHQNEVEQSSYNFEHADVDALFNQFNQCEKDSQKLIEAGLALPAYEQVMKASHAFNLLDARHAISVTERQRYILRVRALSKAVAEAYYGKREALGFPLCKNLVK.

It belongs to the class-II aminoacyl-tRNA synthetase family. As to quaternary structure, tetramer of two alpha and two beta subunits.

Its subcellular location is the cytoplasm. It carries out the reaction tRNA(Gly) + glycine + ATP = glycyl-tRNA(Gly) + AMP + diphosphate. The protein is Glycine--tRNA ligase alpha subunit of Psychromonas ingrahamii (strain DSM 17664 / CCUG 51855 / 37).